A 182-amino-acid polypeptide reads, in one-letter code: Protein GrpE (182 aa).

It belongs to the GrpE family. As to quaternary structure, homodimer.

The protein resides in the cytoplasm. In terms of biological role, participates actively in the response to hyperosmotic and heat shock by preventing the aggregation of stress-denatured proteins, in association with DnaK and GrpE. It is the nucleotide exchange factor for DnaK and may function as a thermosensor. Unfolded proteins bind initially to DnaJ; upon interaction with the DnaJ-bound protein, DnaK hydrolyzes its bound ATP, resulting in the formation of a stable complex. GrpE releases ADP from DnaK; ATP binding to DnaK triggers the release of the substrate protein, thus completing the reaction cycle. Several rounds of ATP-dependent interactions between DnaJ, DnaK and GrpE are required for fully efficient folding. The chain is Protein GrpE from Aquifex aeolicus (strain VF5).